A 693-amino-acid chain; its full sequence is Polyribonucleotide nucleotidyltransferase (693 aa).

Residues D490 and D496 each coordinate Mg(2+). One can recognise a KH domain in the interval 557 to 617 (PRISWFFIDP…EKVQEAVEYI (61 aa)). Residues 627 to 691 (GDLYTGKVTR…DAGRLQFRRL (65 aa)) form the S1 motif domain.

This sequence belongs to the polyribonucleotide nucleotidyltransferase family. The cofactor is Mg(2+).

Its subcellular location is the cytoplasm. The enzyme catalyses RNA(n+1) + phosphate = RNA(n) + a ribonucleoside 5'-diphosphate. In terms of biological role, involved in mRNA degradation. Catalyzes the phosphorolysis of single-stranded polyribonucleotides processively in the 3'- to 5'-direction. The sequence is that of Polyribonucleotide nucleotidyltransferase from Fervidobacterium nodosum (strain ATCC 35602 / DSM 5306 / Rt17-B1).